The chain runs to 413 residues: Adenylosuccinate synthetase (413 aa).

GTP-binding positions include 11-17 (GDEGKGK) and 39-41 (GHT). Asp-12 (proton acceptor) is an active-site residue. Mg(2+) is bound by residues Asp-12 and Gly-39. Residues 12–15 (DEGK), 37–40 (NAGH), Thr-125, Arg-139, Gln-217, Thr-232, and Arg-296 each bind IMP. The active-site Proton donor is the His-40. 292–298 (TTTGRPR) is a substrate binding site. Residues Arg-298, 324–326 (KLD), and 402–404 (STG) each bind GTP.

It belongs to the adenylosuccinate synthetase family. In terms of assembly, homodimer. Mg(2+) is required as a cofactor.

It localises to the cytoplasm. The enzyme catalyses IMP + L-aspartate + GTP = N(6)-(1,2-dicarboxyethyl)-AMP + GDP + phosphate + 2 H(+). The protein operates within purine metabolism; AMP biosynthesis via de novo pathway; AMP from IMP: step 1/2. Functionally, plays an important role in the de novo pathway of purine nucleotide biosynthesis. Catalyzes the first committed step in the biosynthesis of AMP from IMP. The sequence is that of Adenylosuccinate synthetase from Nautilia profundicola (strain ATCC BAA-1463 / DSM 18972 / AmH).